The chain runs to 205 residues: Regulatory protein RecX (205 aa).

The protein belongs to the RecX family.

The protein resides in the cytoplasm. Its function is as follows. Modulates RecA activity. This Finegoldia magna (strain ATCC 29328 / DSM 20472 / WAL 2508) (Peptostreptococcus magnus) protein is Regulatory protein RecX.